Reading from the N-terminus, the 484-residue chain is MVTTTEKTNIGYIRQVIGPVVDVEFPAGKLPQIYNALVIKGKNEAGQDLSVTCEVQQLLGDRKVRAVSMSTTDGLVRGLEVIDTGAPISVPVGEATLGRIFNVLGEPVDELGPVNAATTSPIHRDAPKLTDLETKPKVFETGIKVIDLLAPYRQGGKIGLFGGAGVGKTVLIQELINNIAKEHGGVSVFGGVGERTREGNDLYQEFKESGVIDEKNIANSKVALVYGQMNEPPGARMRVGLSALTMAEHFRDVNKQDVLLFIDNIFRFVQAGSEVSALLGRMPSAVGYQPTLGTDVGQLQERITSTLEGSITSIQAVYVPADDLTDPAPATTFAHLDATTVLSRGLASKGIYPAVDPLDSTSTMLQPSIVGEEHYRTARAVQSTLQRYKELQDIIAILGLDELSEEDRQTVARARKIEKFLSQPFFVAEVFTGSPGKYVKLEDTISGFNRILNGELDDLPEQAFYLVGDIQEAIEKGAKLKAES.

Residue 162-169 participates in ATP binding; that stretch reads GGAGVGKT.

Belongs to the ATPase alpha/beta chains family. F-type ATPases have 2 components, CF(1) - the catalytic core - and CF(0) - the membrane proton channel. CF(1) has five subunits: alpha(3), beta(3), gamma(1), delta(1), epsilon(1). CF(0) has four main subunits: a(1), b(1), b'(1) and c(9-12).

It localises to the cellular thylakoid membrane. The catalysed reaction is ATP + H2O + 4 H(+)(in) = ADP + phosphate + 5 H(+)(out). Functionally, produces ATP from ADP in the presence of a proton gradient across the membrane. The catalytic sites are hosted primarily by the beta subunits. The chain is ATP synthase subunit beta from Synechococcus elongatus (strain ATCC 33912 / PCC 7942 / FACHB-805) (Anacystis nidulans R2).